We begin with the raw amino-acid sequence, 61 residues long: Small ribosomal subunit protein uS14 (61 aa).

Zn(2+) contacts are provided by C24, C27, C40, and C43.

This sequence belongs to the universal ribosomal protein uS14 family. Zinc-binding uS14 subfamily. In terms of assembly, part of the 30S ribosomal subunit. Contacts proteins S3 and S10. It depends on Zn(2+) as a cofactor.

In terms of biological role, binds 16S rRNA, required for the assembly of 30S particles and may also be responsible for determining the conformation of the 16S rRNA at the A site. The chain is Small ribosomal subunit protein uS14 from Rubrobacter xylanophilus (strain DSM 9941 / JCM 11954 / NBRC 16129 / PRD-1).